A 78-amino-acid polypeptide reads, in one-letter code: MSRVCQVTGKRPVTGNNRSHALNATKRRFLPNLHSHRFWVESEKRFVTLRVSAKGMRVIDKKGIDTVLAELRARGEKY.

It belongs to the bacterial ribosomal protein bL28 family.

In Escherichia coli O139:H28 (strain E24377A / ETEC), this protein is Large ribosomal subunit protein bL28.